The following is a 162-amino-acid chain: uncharacterized protein (162 aa).

Residues 1 to 18 (MRKTFLTLLCVSSAIAHA) form the signal peptide.

The protein belongs to the fimbrial protein family.

Functionally, part of the yfcOPQRSUV fimbrial operon. Could contribute to adhesion to various surfaces in specific environmental niches. Increases adhesion to eukaryotic T24 bladder epithelial cells in the absence of fim genes. This is an uncharacterized protein from Escherichia coli (strain K12).